Reading from the N-terminus, the 303-residue chain is UDP-N-acetylenolpyruvoylglucosamine reductase (303 aa).

The region spanning 29-196 (KIGGPADVLV…LEAVLQLEQK (168 aa)) is the FAD-binding PCMH-type domain. R174 is a catalytic residue. S225 serves as the catalytic Proton donor. E295 is a catalytic residue.

It belongs to the MurB family. FAD is required as a cofactor.

It localises to the cytoplasm. It catalyses the reaction UDP-N-acetyl-alpha-D-muramate + NADP(+) = UDP-N-acetyl-3-O-(1-carboxyvinyl)-alpha-D-glucosamine + NADPH + H(+). Its pathway is cell wall biogenesis; peptidoglycan biosynthesis. Cell wall formation. The protein is UDP-N-acetylenolpyruvoylglucosamine reductase of Bacillus licheniformis (strain ATCC 14580 / DSM 13 / JCM 2505 / CCUG 7422 / NBRC 12200 / NCIMB 9375 / NCTC 10341 / NRRL NRS-1264 / Gibson 46).